We begin with the raw amino-acid sequence, 105 residues long: Integration host factor subunit alpha (105 aa).

The protein belongs to the bacterial histone-like protein family. In terms of assembly, heterodimer of an alpha and a beta chain.

Its function is as follows. This protein is one of the two subunits of integration host factor, a specific DNA-binding protein that functions in genetic recombination as well as in transcriptional and translational control. This chain is Integration host factor subunit alpha, found in Xanthobacter autotrophicus (strain ATCC BAA-1158 / Py2).